The sequence spans 265 residues: Elongation factor 1-delta (265 aa).

The segment covering 31 to 54 (MGSASNKPHNSPQSAASALSNSGD) has biased composition (polar residues). 2 disordered regions span residues 31–64 (MGSA…RVAN) and 118–155 (KVQV…DAEA). Over residues 130–153 (GTGEDDDDDDDIDLFGSDNEEEDA) the composition is skewed to acidic residues.

The protein belongs to the EF-1-beta/EF-1-delta family. In terms of assembly, EF-1 is composed of 4 subunits: alpha, beta, delta, and gamma.

Functionally, EF-1-beta and EF-1-delta stimulate the exchange of GDP bound to EF-1-alpha to GTP. This is Elongation factor 1-delta (eef1d) from Xenopus laevis (African clawed frog).